Consider the following 198-residue polypeptide: RxLR effector protein Htp1 (198 aa).

A signal peptide spans 1 to 23 (MRIHHPLTLAALCVVLHESLGAA). The RxLR signature appears at 46–49 (RHLR). Disordered regions lie at residues 48–101 (LRSD…TPMK) and 115–198 (TKNA…PTFD). Asparagine 70 carries an N-linked (GlcNAc...) asparagine glycan. The span at 70-91 (NNSQEQATTGNSVETNQVPSTE) shows a compositional bias: polar residues. Over residues 126–137 (DDDDSDFSDDDV) the composition is skewed to acidic residues. The segment covering 173–191 (APTNAPTGTDAPTDAPTDA) has biased composition (low complexity).

This sequence belongs to the RxLR effector family. Interacts with the effector Htp3 within the host cells.

It localises to the secreted. The protein localises to the host cell. In terms of biological role, effector involved in the disease saprolegniosis in salmonids and other freshwater fish, resulting in considerable economic losses in aquaculture. Within the host fish cells, Htp1 is involved in the uptake of the S.parasitica effector Htp3 at a neutral pH (pH 7.5) and its release from vesicles into host cytosol where it degrades nucleic acids. The polypeptide is RxLR effector protein Htp1 (Saprolegnia parasitica (strain CBS 223.65)).